Consider the following 211-residue polypeptide: UPF0637 protein Bsph_1379 (211 aa).

It belongs to the UPF0637 family.

The polypeptide is UPF0637 protein Bsph_1379 (Lysinibacillus sphaericus (strain C3-41)).